The primary structure comprises 377 residues: tRNA-specific 2-thiouridylase MnmA (377 aa).

Residues 18-25 (AMSGGVDS) and Met44 each bind ATP. The active-site Nucleophile is the Cys113. A disulfide bridge connects residues Cys113 and Cys210. ATP is bound at residue Gly137. Residues 159-161 (RDQ) are interaction with tRNA. Residue Cys210 is the Cysteine persulfide intermediate of the active site.

It belongs to the MnmA/TRMU family.

Its subcellular location is the cytoplasm. The enzyme catalyses S-sulfanyl-L-cysteinyl-[protein] + uridine(34) in tRNA + AH2 + ATP = 2-thiouridine(34) in tRNA + L-cysteinyl-[protein] + A + AMP + diphosphate + H(+). Functionally, catalyzes the 2-thiolation of uridine at the wobble position (U34) of tRNA, leading to the formation of s(2)U34. The sequence is that of tRNA-specific 2-thiouridylase MnmA from Rhodospirillum rubrum (strain ATCC 11170 / ATH 1.1.1 / DSM 467 / LMG 4362 / NCIMB 8255 / S1).